The primary structure comprises 184 residues: UPF0149 protein PSPA7_5968 (184 aa).

The protein belongs to the UPF0149 family.

The protein is UPF0149 protein PSPA7_5968 of Pseudomonas paraeruginosa (strain DSM 24068 / PA7) (Pseudomonas aeruginosa (strain PA7)).